The primary structure comprises 917 residues: Protein translocase subunit SecA (917 aa).

ATP contacts are provided by residues Q87, 105–109, and D516; that span reads GEGKT. Zn(2+) contacts are provided by C901, C903, C912, and H913.

Belongs to the SecA family. As to quaternary structure, monomer and homodimer. Part of the essential Sec protein translocation apparatus which comprises SecA, SecYEG and auxiliary proteins SecDF-YajC and YidC. It depends on Zn(2+) as a cofactor.

Its subcellular location is the cell inner membrane. The protein resides in the cytoplasm. It catalyses the reaction ATP + H2O + cellular proteinSide 1 = ADP + phosphate + cellular proteinSide 2.. In terms of biological role, part of the Sec protein translocase complex. Interacts with the SecYEG preprotein conducting channel. Has a central role in coupling the hydrolysis of ATP to the transfer of proteins into and across the cell membrane, serving both as a receptor for the preprotein-SecB complex and as an ATP-driven molecular motor driving the stepwise translocation of polypeptide chains across the membrane. This chain is Protein translocase subunit SecA, found in Acidovorax sp. (strain JS42).